A 672-amino-acid polypeptide reads, in one-letter code: MTDIQNQINQLRNTLRHHEYQYHVLDNPEIPDSEYDRLFHRLKALEQQHPELISADSPTQRVGAKPLAGFAQITHELPMLSLDNVFSDEEFYAFVKRIQERLITLPDNLEFCCEPKLDGLAVSILYENGRLVQAATRGDGTTGEDITLNIRTIRNIPLQLLTDNPPVRLEVRGEVFMPQEGFDRLNEAALARGEKTFANPRNAAAGSLRQLDPKITSQRPLVWNAYSIGIAEGADLPPTHYERLQWLKSIGIPVNGEIRLCRGAENVLKFYRTIQEKRPELGYDIDGTVLKVNEIALQERLGFISKAPRWAIAYKFPAQEEMTVLNDVEFQVGRTGAITPVAKLQPVFVAGVTVSNATLHNGDEIARLDIAIGDTVIVRRAGDVIPQIIGVVHDRRPPNAEPIIFPTLCPVCHSAIVRIEGEAVARCTGGLFCDAQRKESLKHFVSRRAMDIDGVGAKLIEQLVDRELIRTPADLFKLDLITLMRLERMGEKSAQKALDSLEKAKKTTLARFIFALGIREVGEATALNLANFFKNLTALQTADLEQLQAVSDVGEVVANRIYVFWREQHNIDVVNDLIAQGVHWDDVEEKQVNENPFKEKTVVLTGTLSQMGRNEAKALLQQMGAKVAGSVSAKTHIVIAGDSAGSKLSKAQDLGVAVMSEAEFLEIVNSFS.

NAD(+) contacts are provided by residues 32-36 (DSEYD), 81-82 (SL), and glutamate 114. Lysine 116 serves as the catalytic N6-AMP-lysine intermediate. Residues arginine 137, glutamate 174, lysine 291, and lysine 315 each contribute to the NAD(+) site. Zn(2+) is bound by residues cysteine 409, cysteine 412, cysteine 427, and cysteine 433. Residues 592 to 672 (VNENPFKEKT…EFLEIVNSFS (81 aa)) enclose the BRCT domain.

This sequence belongs to the NAD-dependent DNA ligase family. LigA subfamily. Mg(2+) serves as cofactor. The cofactor is Mn(2+).

The enzyme catalyses NAD(+) + (deoxyribonucleotide)n-3'-hydroxyl + 5'-phospho-(deoxyribonucleotide)m = (deoxyribonucleotide)n+m + AMP + beta-nicotinamide D-nucleotide.. Functionally, DNA ligase that catalyzes the formation of phosphodiester linkages between 5'-phosphoryl and 3'-hydroxyl groups in double-stranded DNA using NAD as a coenzyme and as the energy source for the reaction. It is essential for DNA replication and repair of damaged DNA. The chain is DNA ligase from Actinobacillus succinogenes (strain ATCC 55618 / DSM 22257 / CCUG 43843 / 130Z).